Here is a 652-residue protein sequence, read N- to C-terminus: Chaperone protein HtpG (652 aa).

Residues 1–351 are a; substrate-binding; that stretch reads MTEHVEQLEF…AQDLSLNVSR (351 aa). Residues 352–568 form a b region; it reads EILQQDRQIQ…VFDFTPMLER (217 aa). A c region spans residues 569 to 652; that stretch reads MYRASGQPVP…ILTDRLTRTL (84 aa).

This sequence belongs to the heat shock protein 90 family. In terms of assembly, homodimer.

Its subcellular location is the cytoplasm. In terms of biological role, molecular chaperone. Has ATPase activity. This is Chaperone protein HtpG from Nocardia farcinica (strain IFM 10152).